Reading from the N-terminus, the 295-residue chain is Bifunctional protein FolD (295 aa).

NADP(+) is bound by residues 166 to 168, Ser-195, and Ile-236; that span reads GRS.

It belongs to the tetrahydrofolate dehydrogenase/cyclohydrolase family. In terms of assembly, homodimer.

The catalysed reaction is (6R)-5,10-methylene-5,6,7,8-tetrahydrofolate + NADP(+) = (6R)-5,10-methenyltetrahydrofolate + NADPH. The enzyme catalyses (6R)-5,10-methenyltetrahydrofolate + H2O = (6R)-10-formyltetrahydrofolate + H(+). It functions in the pathway one-carbon metabolism; tetrahydrofolate interconversion. Its function is as follows. Catalyzes the oxidation of 5,10-methylenetetrahydrofolate to 5,10-methenyltetrahydrofolate and then the hydrolysis of 5,10-methenyltetrahydrofolate to 10-formyltetrahydrofolate. This chain is Bifunctional protein FolD, found in Chlorobium chlorochromatii (strain CaD3).